We begin with the raw amino-acid sequence, 297 residues long: uncharacterized protein (297 aa).

7 WD repeats span residues 12–51 (KAKEPINVVKYNRTGKYVLAAGNERVVRLWNVKSGACIHE), 54–93 (GHGHEILDLDLVYDSTKFASCGGDKFIQVWDVNTGKVDRR), 96–135 (GHLAQINTIRYNEDSSILASGSFDSKVRLWDCRSNSFSPI), 140–177 (DAKDSVSSIDIAEHLIVTGSTDGTLRTYDIRKGTLSSD), 179–217 (FSHPITSVKTSKSASFSLISSLNSSIHLLDQETGKILKS), 222–261 (KNMEYRVRSSFNQSETIVFSGSEDGKVYLWDLENETQITS), and 265–297 (VGTPIVTDISCHPTMDDFIIATVHGDLFIYQYN).

This sequence belongs to the WD repeat MORG1 family.

It localises to the cytoplasm. The protein localises to the nucleus. This is an uncharacterized protein from Schizosaccharomyces pombe (strain 972 / ATCC 24843) (Fission yeast).